The primary structure comprises 179 residues: Large ribosomal subunit protein uL5 (179 aa).

It belongs to the universal ribosomal protein uL5 family. As to quaternary structure, part of the 50S ribosomal subunit; part of the 5S rRNA/L5/L18/L25 subcomplex. Contacts the 5S rRNA and the P site tRNA. Forms a bridge to the 30S subunit in the 70S ribosome.

Functionally, this is one of the proteins that bind and probably mediate the attachment of the 5S RNA into the large ribosomal subunit, where it forms part of the central protuberance. In the 70S ribosome it contacts protein S13 of the 30S subunit (bridge B1b), connecting the 2 subunits; this bridge is implicated in subunit movement. Contacts the P site tRNA; the 5S rRNA and some of its associated proteins might help stabilize positioning of ribosome-bound tRNAs. The sequence is that of Large ribosomal subunit protein uL5 from Thiobacillus denitrificans (strain ATCC 25259 / T1).